The chain runs to 191 residues: Small ribosomal subunit protein uS5 (191 aa).

An S5 DRBM domain is found at 21–84 (LVDKLVTINR…ERAKRTMIRV (64 aa)). The disordered stretch occupies residues 161-191 (PRHVASRRGKKAAELFGKREQGQTEAEVTNG). A compositionally biased stretch (basic and acidic residues) spans 171 to 182 (KAAELFGKREQG).

It belongs to the universal ribosomal protein uS5 family. Part of the 30S ribosomal subunit. Contacts proteins S4 and S8.

Functionally, with S4 and S12 plays an important role in translational accuracy. In terms of biological role, located at the back of the 30S subunit body where it stabilizes the conformation of the head with respect to the body. This chain is Small ribosomal subunit protein uS5, found in Gluconobacter oxydans (strain 621H) (Gluconobacter suboxydans).